The chain runs to 644 residues: Probable potassium transport system protein Kup (644 aa).

The next 12 membrane-spanning stretches (helical) occupy residues 10–30 (GGAT…GDIG), 56–76 (ILSL…AWVI), 106–126 (WWIL…GVIT), 143–163 (PAWK…LFMV), 175–195 (FGPS…TWIV), 212–232 (FFGI…LAVT), 252–272 (AWYF…GALL), 282–302 (PFFM…SGIA), 343–363 (IYLP…ILWF), 371–391 (FAYG…VFFV), 403–423 (AGLF…ANLL), and 425–445 (FVEG…TMST).

The protein belongs to the HAK/KUP transporter (TC 2.A.72) family.

Its subcellular location is the cell inner membrane. The enzyme catalyses K(+)(in) + H(+)(in) = K(+)(out) + H(+)(out). In terms of biological role, transport of potassium into the cell. Likely operates as a K(+):H(+) symporter. This chain is Probable potassium transport system protein Kup, found in Acidithiobacillus ferrooxidans (strain ATCC 23270 / DSM 14882 / CIP 104768 / NCIMB 8455) (Ferrobacillus ferrooxidans (strain ATCC 23270)).